We begin with the raw amino-acid sequence, 583 residues long: Aspartate--tRNA ligase (583 aa).

Position 173 (Glu173) interacts with L-aspartate. Positions 197-200 (QLFK) are aspartate. Arg219 contacts L-aspartate. ATP contacts are provided by residues 219–221 (RDE) and Gln228. His444 is an L-aspartate binding site. An ATP-binding site is contributed by Glu478. Arg485 contacts L-aspartate. Residue 530–533 (GLDR) participates in ATP binding.

This sequence belongs to the class-II aminoacyl-tRNA synthetase family. Type 1 subfamily. As to quaternary structure, homodimer.

Its subcellular location is the cytoplasm. The enzyme catalyses tRNA(Asp) + L-aspartate + ATP = L-aspartyl-tRNA(Asp) + AMP + diphosphate. Functionally, catalyzes the attachment of L-aspartate to tRNA(Asp) in a two-step reaction: L-aspartate is first activated by ATP to form Asp-AMP and then transferred to the acceptor end of tRNA(Asp). The protein is Aspartate--tRNA ligase of Azobacteroides pseudotrichonymphae genomovar. CFP2.